Consider the following 539-residue polypeptide: Sphingosine-1-phosphate lyase (539 aa).

Residues 1–46 form the signal peptide; sequence MELAMDFALRLRDAANHHLSRYEPLVLLAAPLLALLAARTLHAAAA. The Lumenal portion of the chain corresponds to 47 to 54; the sequence is AVADRGLR. Residues 55–75 traverse the membrane as a helical segment; the sequence is TVLLALAMTAIKLLPGVSAYI. Over 76-539 the chain is Cytoplasmic; it reads NAEKRKVVDQ…LLVEFMDASC (464 aa). Position 344 is an N6-(pyridoxal phosphate)lysine (lysine 344).

This sequence belongs to the group II decarboxylase family. Sphingosine-1-phosphate lyase subfamily. It depends on pyridoxal 5'-phosphate as a cofactor.

The protein resides in the endoplasmic reticulum membrane. It catalyses the reaction sphinganine 1-phosphate = hexadecanal + phosphoethanolamine. It participates in lipid metabolism; sphingolipid metabolism. In terms of biological role, cleaves phosphorylated sphingoid bases (PSBs), such as sphingosine-1-phosphate, into fatty aldehydes and phosphoethanolamine. Elevates stress-induced ceramide production and apoptosis. In Oryza sativa subsp. japonica (Rice), this protein is Sphingosine-1-phosphate lyase (SPL).